A 316-amino-acid chain; its full sequence is B3 domain-containing protein Os04g0581400 (316 aa).

A disordered region spans residues 1 to 100 (MEFATTSSRF…GSGGGGGGED (100 aa)). Residues 13 to 36 (EEEEEEEGEQEMEQEQDEEEEEAE) are compositionally biased toward acidic residues. A compositionally biased stretch (low complexity) spans 46–77 (TSAAAAATASSSSPTSVSPSATASAAASTSAS). Over residues 88-98 (GASGSGGGGGG) the composition is skewed to gly residues. A DNA-binding region (TF-B3) is located at residues 110-215 (FDKVVTPSDV…RLFIDWKRRA (106 aa)). The disordered stretch occupies residues 239–290 (GGAGASSCRPRRPPRSTSITAFARASTSATSTPLCRRGSSSSSAPQGRGFIS). A compositionally biased stretch (low complexity) spans 253-270 (RSTSITAFARASTSATST).

The protein resides in the nucleus. The chain is B3 domain-containing protein Os04g0581400 from Oryza sativa subsp. japonica (Rice).